A 97-amino-acid chain; its full sequence is Citrate lyase acyl carrier protein (97 aa).

S14 is modified (O-(phosphoribosyl dephospho-coenzyme A)serine).

Belongs to the CitD family. As to quaternary structure, oligomer with a subunit composition of (alpha,beta,gamma)6.

It is found in the cytoplasm. Its function is as follows. Covalent carrier of the coenzyme of citrate lyase. The protein is Citrate lyase acyl carrier protein of Oenococcus oeni (strain ATCC BAA-331 / PSU-1).